The sequence spans 365 residues: Galactoside alpha-(1,2)-fucosyltransferase 1 (365 aa).

Over 1–8 (MWPLSHRH) the chain is Cytoplasmic. The chain crosses the membrane as a helical; Signal-anchor for type II membrane protein span at residues 9–25 (LCLAFLLVCVLSAISFF). The Lumenal portion of the chain corresponds to 26 to 365 (LHIYQDSIRH…LSSLWTLAEP (340 aa)). 3 N-linked (GlcNAc...) asparagine glycosylation sites follow: Asn65, Asn301, and Asn327.

This sequence belongs to the glycosyltransferase 11 family.

The protein resides in the golgi apparatus. The protein localises to the golgi stack membrane. It catalyses the reaction a beta-D-galactosyl-(1-&gt;4)-N-acetyl-beta-D-glucosaminyl derivative + GDP-beta-L-fucose = an alpha-L-Fuc-(1-&gt;2)-beta-D-Gal-(1-&gt;4)-beta-D-GlcNAc derivative + GDP + H(+). The catalysed reaction is a ganglioside GA1 + GDP-beta-L-fucose = a ganglioside Fuc-GA1 + GDP + H(+). It carries out the reaction a beta-D-Gal-(1-&gt;3)-beta-D-GlcNAc-(1-&gt;3)-beta-D-Gal-(1-&gt;4)-beta-D-Glc-(1&lt;-&gt;1')-Cer(d18:1(4E)) + GDP-beta-L-fucose = alpha-L-fucosyl-(1-&gt;2)- beta-D-galactosyl-(1-&gt;3)-N-acetyl-beta-D-glucosaminyl-(1-&gt;3)-beta-D-galactosyl-(1-&gt;4)-beta-D-glucosyl-(1&lt;-&gt;1')-N-acylsphing-4-enine + GDP + H(+). The enzyme catalyses a neolactoside nLc4Cer(d18:1(4E)) + GDP-beta-L-fucose = a neolactoside IV(2)-alpha-Fuc-nLc4Cer(d18:1(4E)) + GDP + H(+). It catalyses the reaction a ganglioside GM1 + GDP-beta-L-fucose = a ganglioside Fuc-GM1 + GDP + H(+). The catalysed reaction is beta-D-galactosyl-(1-&gt;3)-N-acetyl-D-galactosamine + GDP-beta-L-fucose = alpha-L-fucosyl-(1-&gt;2)-beta-D-galactosyl-(1-&gt;3)-N-acetyl-D-galactosamine + GDP + H(+). It participates in protein modification; protein glycosylation. Catalyzes the transfer of L-fucose, from a guanosine diphosphate-beta-L-fucose, to the terminal galactose residue of glycoconjugates through an alpha(1,2) linkage leading to H antigen synthesis that is an intermediate substrate in the synthesis of ABO blood group antigens. H antigen is essential for maturation of the glomerular layer of the main olfactory bulb, in cell migration and early cell-cell contacts during tumor associated angiogenesis. Preferentially fucosylates soluble lactose and to a lesser extent fucosylates glycolipids gangliosides GA1 and GM1a. In Leontocebus fuscicollis (Brown-mantled tamarin), this protein is Galactoside alpha-(1,2)-fucosyltransferase 1.